The chain runs to 137 residues: MQRLLGSIVILATVFTFCEATISSACLRCICNVESGCRPIGCHYDVYSYSCGYFQIKENYWEDCGKPGTSFKACANDYTCASNCVRAYMKRYIGSSGCPANCESYARIHNGGPRGCRHPSTLRYWEKVHQQGCNVNS.

A signal peptide spans 1-20 (MQRLLGSIVILATVFTFCEA). Residues 21–135 (TISSACLRCI…EKVHQQGCNV (115 aa)) enclose the I-type lysozyme domain. Disulfide bonds link C26/C102, C31/C37, C42/C51, C64/C84, C74/C80, and C98/C116. E34 functions as the Proton donor in the catalytic mechanism. The Nucleophile role is filled by D45. 57-63 (KENYWED) contributes to the substrate binding site. Residues Y88 and 109–111 (HNG) each bind substrate.

The protein belongs to the glycosyl hydrolase 22 family. Type-I lysozyme subfamily. Expressed in the basophil cells of the oyster digestive gland.

The protein localises to the secreted. It carries out the reaction Hydrolysis of (1-&gt;4)-beta-linkages between N-acetylmuramic acid and N-acetyl-D-glucosamine residues in a peptidoglycan and between N-acetyl-D-glucosamine residues in chitodextrins.. Has bacteriolytic activity. May play a role in digestion and in the host defense mechanisms against invading microbes. This is Lysozyme (lysoz) from Magallana gigas (Pacific oyster).